A 772-amino-acid polypeptide reads, in one-letter code: Mitochondrial intermediate peptidase (772 aa).

The transit peptide at 1–42 directs the protein to the mitochondrion; sequence MFANSARNALKKRPQNLQPFRFQGCLFSKRANRPLTTKVQHL. A Zn(2+)-binding site is contributed by histidine 556. Residue glutamate 557 is part of the active site. Histidine 560 and histidine 563 together coordinate Zn(2+).

This sequence belongs to the peptidase M3 family. Requires Zn(2+) as cofactor.

It localises to the mitochondrion matrix. It catalyses the reaction Release of an N-terminal octapeptide as second stage of processing of some proteins imported into the mitochondrion.. Its function is as follows. Cleaves proteins, imported into the mitochondrion, to their mature size. While most mitochondrial precursor proteins are processed to the mature form in one step by mitochondrial processing peptidase (MPP), the sequential cleavage by MIP of an octapeptide after initial processing by MPP is a required step for a subgroup of nuclear-encoded precursor proteins destined for the matrix or the inner membrane. In Laccaria bicolor (strain S238N-H82 / ATCC MYA-4686) (Bicoloured deceiver), this protein is Mitochondrial intermediate peptidase (OCT1).